The following is a 469-amino-acid chain: 3-isopropylmalate dehydratase large subunit (469 aa).

[4Fe-4S] cluster contacts are provided by C349, C410, and C413.

This sequence belongs to the aconitase/IPM isomerase family. LeuC type 1 subfamily. In terms of assembly, heterodimer of LeuC and LeuD. The cofactor is [4Fe-4S] cluster.

The catalysed reaction is (2R,3S)-3-isopropylmalate = (2S)-2-isopropylmalate. Its pathway is amino-acid biosynthesis; L-leucine biosynthesis; L-leucine from 3-methyl-2-oxobutanoate: step 2/4. Catalyzes the isomerization between 2-isopropylmalate and 3-isopropylmalate, via the formation of 2-isopropylmaleate. This chain is 3-isopropylmalate dehydratase large subunit, found in Neisseria gonorrhoeae (strain ATCC 700825 / FA 1090).